A 373-amino-acid chain; its full sequence is Pulmonary surfactant-associated protein B (373 aa).

The signal sequence occupies residues 1-22 (MAKSHLLPWLLLLPILCGPGTA). The propeptide occupies 23 to 187 (AAITYSLACA…PQTQDLSEQL (165 aa)). Positions 24-64 (AITYSLACAQGPEFWCQSLEQALQCRALGHCLQEVWGHVEA) constitute a Saposin A-type domain. Saposin B-type domains lie at 64 to 146 (ADDL…KPRH), 191 to 268 (PIPY…SSED), and 287 to 362 (QDSD…AAPF). Disulfide bonds link Cys68–Cys142, Cys71–Cys136, Cys99–Cys111, Cys195–Cys264, Cys198–Cys258, Cys222–Cys233, Cys291–Cys358, Cys294–Cys352, and Cys317–Cys327. Asn73 is a glycosylation site (N-linked (GlcNAc...) asparagine). Positions 267–373 (EDSAGPALPA…PLQCVHSPHF (107 aa)) are excised as a propeptide. N-linked (GlcNAc...) asparagine glycosylation is present at Asn303.

As to quaternary structure, homodimer; disulfide-linked.

The protein resides in the secreted. It is found in the extracellular space. The protein localises to the surface film. Functionally, pulmonary surfactant-associated proteins promote alveolar stability by lowering the surface tension at the air-liquid interface in the peripheral air spaces. SP-B increases the collapse pressure of palmitic acid to nearly 70 millinewtons per meter. The polypeptide is Pulmonary surfactant-associated protein B (SFTPB) (Bos taurus (Bovine)).